Reading from the N-terminus, the 284-residue chain is Nucleotide-binding protein Sbal_3671 (284 aa).

Residue 8–15 (GRSGSGKS) participates in ATP binding. A GTP-binding site is contributed by 56 to 59 (DVRN).

It belongs to the RapZ-like family.

Its function is as follows. Displays ATPase and GTPase activities. In Shewanella baltica (strain OS155 / ATCC BAA-1091), this protein is Nucleotide-binding protein Sbal_3671.